A 378-amino-acid chain; its full sequence is uncharacterized protein (378 aa).

Transmembrane regions (helical) follow at residues 7–29 (VTPF…RLSQ), 33–55 (LFFV…YQII), 68–85 (VSYL…EFYT), 90–108 (SGSL…HLLL), 115–137 (PLTV…FLYL), 152–174 (LTVG…MLIM), 204–225 (NYKL…FLYL), 245–267 (IFLF…ASHA), 280–302 (LILY…PRIV), and 347–366 (FSPL…ALFL).

The protein resides in the cell membrane. This is an uncharacterized protein from Aquifex aeolicus (strain VF5).